Consider the following 511-residue polypeptide: Maturase K (511 aa).

The protein belongs to the intron maturase 2 family. MatK subfamily.

The protein localises to the plastid. It localises to the chloroplast. Functionally, usually encoded in the trnK tRNA gene intron. Probably assists in splicing its own and other chloroplast group II introns. The polypeptide is Maturase K (Campsis radicans (Trumpet creeper)).